An 864-amino-acid polypeptide reads, in one-letter code: Leucine--tRNA ligase (864 aa).

A 'HIGH' region motif is present at residues 42–52; that stretch reads PYPSGKLHMGH. Positions 624 to 628 match the 'KMSKS' region motif; it reads KMSKS. Position 627 (Lys627) interacts with ATP.

Belongs to the class-I aminoacyl-tRNA synthetase family.

It localises to the cytoplasm. The enzyme catalyses tRNA(Leu) + L-leucine + ATP = L-leucyl-tRNA(Leu) + AMP + diphosphate. The chain is Leucine--tRNA ligase from Burkholderia mallei (strain NCTC 10229).